A 144-amino-acid chain; its full sequence is Protein WAP-3 (144 aa).

The first 21 residues, 1–21 (MRSRSFLVLVAVFLICETLVA), serve as a signal peptide directing secretion. A disordered region spans residues 28-49 (RGPKGQGQDPVEGQDQDEGQGP). Position 34 (Gly34) is a region of interest, 8 X 6 AA approximate tandem repeats. Repeat copies occupy residues 34–39 (GQDPVE), 40–45 (GQDQDE), 46–51 (GQGPVK), 58–63 (GQDLVK), 64–69 (GQDPVE), 70–75 (GQDPVK), 76–81 (AQLPDK), and 82–87 (VQDPVK). The segment at 64-85 (GQDPVEGQDPVKAQLPDKVQDP) is disordered. A WAP domain is found at 97–144 (LFPKPGVCPKIIFCPLVNPPIKCWRDSHCPGVKKCCPSLCGKGCVTPR). Cystine bridges form between Cys104–Cys132, Cys110–Cys136, Cys119–Cys131, and Cys125–Cys140.

Large intestine (relatively low levels).

This is Protein WAP-3 from Sus scrofa (Pig).